Reading from the N-terminus, the 234-residue chain is Orotidine 5'-phosphate decarboxylase (234 aa).

Substrate is bound by residues Asp10, Lys31, 58-67 (DLKLHDIPNT), Thr121, Arg183, Gln192, Gly212, and Arg213. The Proton donor role is filled by Lys60.

Belongs to the OMP decarboxylase family. Type 1 subfamily. In terms of assembly, homodimer.

The catalysed reaction is orotidine 5'-phosphate + H(+) = UMP + CO2. The protein operates within pyrimidine metabolism; UMP biosynthesis via de novo pathway; UMP from orotate: step 2/2. Its function is as follows. Catalyzes the decarboxylation of orotidine 5'-monophosphate (OMP) to uridine 5'-monophosphate (UMP). The protein is Orotidine 5'-phosphate decarboxylase of Halalkalibacterium halodurans (strain ATCC BAA-125 / DSM 18197 / FERM 7344 / JCM 9153 / C-125) (Bacillus halodurans).